The sequence spans 666 residues: tRNA 5-methylaminomethyl-2-thiouridine biosynthesis bifunctional protein MnmC (666 aa).

Residues 1–245 form a tRNA (mnm(5)s(2)U34)-methyltransferase region; it reads MKQYAIQPAT…KREMLCGVME (245 aa). The segment at 270–666 is FAD-dependent cmnm(5)s(2)U34 oxidoreductase; the sequence is IGGGIASALL…RKLLKGKAVK (397 aa).

In the N-terminal section; belongs to the methyltransferase superfamily. tRNA (mnm(5)s(2)U34)-methyltransferase family. It in the C-terminal section; belongs to the DAO family. It depends on FAD as a cofactor.

It localises to the cytoplasm. It carries out the reaction 5-aminomethyl-2-thiouridine(34) in tRNA + S-adenosyl-L-methionine = 5-methylaminomethyl-2-thiouridine(34) in tRNA + S-adenosyl-L-homocysteine + H(+). Functionally, catalyzes the last two steps in the biosynthesis of 5-methylaminomethyl-2-thiouridine (mnm(5)s(2)U) at the wobble position (U34) in tRNA. Catalyzes the FAD-dependent demodification of cmnm(5)s(2)U34 to nm(5)s(2)U34, followed by the transfer of a methyl group from S-adenosyl-L-methionine to nm(5)s(2)U34, to form mnm(5)s(2)U34. The chain is tRNA 5-methylaminomethyl-2-thiouridine biosynthesis bifunctional protein MnmC from Salmonella paratyphi A (strain ATCC 9150 / SARB42).